An 817-amino-acid polypeptide reads, in one-letter code: MSNHKILTIDNLSLQEFDSEAELIPLLTPEDEEEMNNEELPVSLPILPLRNTVLFPGVVIPISAGRDKSIKLINDANAGGKIIGVVSQINEEDEDPSKDDIHKIGTVARILRVLKMPDGNVTVILQGKKRFEIDEVVSEEPYMTASIKEVSEERPDENDSEFTAILDSVKELAIQIIKESPNIPSEATFAIKNIESQSFLINFVSSNMNLSVKEKQGLLSINGLKERALETLRYMNVELQKLELKNDIQSKVRFDLDQQQREYFLHQQMKTIQEELGGVSQEEEMDEMGQKAKTKKWDEKTQKHFEKELSKMRRMNPQSPDFGIQRNYLELFLELPWGEYSKDKFDLKHAQKVLDKDHFGLDEVKKRMIEHLAVLKLRNDMKSPIICLTGPPGVGKTSIGRSVAEALGREYVRISLGGLRDEAEIRGHRKTYIGAMPGRIIQSLKKAGTSNPVFILDEIDKLSSGNSGDPSSALLEVLDPEQNNAFYDNFLEMGYDLSKVMFIATSNNMAAIQPALRDRMEVIKMSGYTIEEKVEIAKRHLFPKQLEAHGLTSKDLTIGKKQLEKIVEGYTRESGVRNLETKIAQVIRNAAKAVAMEEEYNKKVTDEDIVKVLGVPRLERDKYENNDVAGVVTGLAWTSVGGDILFIESLISEGKGALTITGNLGNVMKESATIALEYIKANAKKLGLAIELFQKYNIHLHVPEGATPKDGPSAGIAMLTSLVSLLTQKKVKKSLAMTGEITLRGKVLPVGGIKEKILAAKRAGIKEIILCHENKSDIDEIKEEYLEGLTFHYVKEMSEVLAIALTDQNVKNAKTLK.

One can recognise a Lon N-terminal domain in the interval 44–239 (LPILPLRNTV…ETLRYMNVEL (196 aa)). An ATP-binding site is contributed by 390–397 (GPPGVGKT). A Lon proteolytic domain is found at 626–807 (NDVAGVVTGL…SEVLAIALTD (182 aa)). Catalysis depends on residues Ser713 and Lys756.

This sequence belongs to the peptidase S16 family. Homohexamer. Organized in a ring with a central cavity.

Its subcellular location is the cytoplasm. It carries out the reaction Hydrolysis of proteins in presence of ATP.. Its function is as follows. ATP-dependent serine protease that mediates the selective degradation of mutant and abnormal proteins as well as certain short-lived regulatory proteins. Required for cellular homeostasis and for survival from DNA damage and developmental changes induced by stress. Degrades polypeptides processively to yield small peptide fragments that are 5 to 10 amino acids long. Binds to DNA in a double-stranded, site-specific manner. This is Lon protease from Flavobacterium johnsoniae (strain ATCC 17061 / DSM 2064 / JCM 8514 / BCRC 14874 / CCUG 350202 / NBRC 14942 / NCIMB 11054 / UW101) (Cytophaga johnsonae).